The following is a 1028-amino-acid chain: MDMSGESSIKRRRSSIAASAERPAKHLRPENSTLTPGDATPANGTVYAVEDEGDAGRMMPIGPAQADSPEWQATIENVVKSVVSIHFCQTCSFDTDMSMSSQATGFVVDAERGYILTNRHVVCAGPFWGYCIFDNHEECDVRPVYRDPVHDFGILKFDPKAIRYLELTELKLRPEAARVGSEIRVVGNDAGEKLSILSGVISRLDRNAPEYGDGYCDFNTNYIQAAAAASGGSSGSPVVNIDGHAIALQAGGRADGAATDYFLPLDRPLRALQCIQRGEPVTRGTIQTQWILKPFDECRRLGLTPDWEAAVRKAAPQETSMLVAEIILPEGPADGKLEEGDVLLQVNGELLTQFIRLDDILDSSVGKPVRLLVQRGGQNVEVECEVGDLHAITPDRFVTVAGGTFHNLSYQQARLYAIATRGVYICEAAGSFKLENTLSGWIIDSVDKRPTRNLDEFIEVMRAIPDRSRVVVSYRHIRDLHTRGTGIVYIDRHWHPKMRMAVRNDGTGLWDFSDLADPVPAAAPVPRKADFIHLDGVSQAAVSDIVRSFVRVSCTMPLKLDGYPQAKKTGYGLVVDAEKGLVVVSRAIVPYDLCDINITVADSIIVTAQVVFLHPLQNYTVIQYDPSLVQAPVQSAKLSTEYIKQGQETIFVGFNQNFRIVVAKTTVTDITTVSIPANASAPRYRAINLDAVTVDTGLSGQCTNGVLIGEDGVVQALWLNYLGERTPSSHKDVEYHLGFATPALLPVTTKIQQGIIPKLRILNMESYVVQMSQARIMGVSEQWIQKVAQANPARHQLFMVRKVDCPPPQYSSTADALEEGDIILTLDGKLITRVSELDTMYDKEVLDVLIVRNGEELHLKVPTIPTEDLETDRAVVFCGAVLQKPHHAVRQQISKLHSEVYVSARSRGSPAYQYGLSPTNFITAVNGVPTPNLDSFVREVSKIPDNTYFRLRAVTFDNVPWVVTMKKNDHYFPMSEYIKDPSQPLGWLTVSHDRDRHKDGITPDQANLNPDAMDEAFEQVSDVEPDVE.

The disordered stretch occupies residues 1–45 (MDMSGESSIKRRRSSIAASAERPAKHLRPENSTLTPGDATPANGT). The serine protease stretch occupies residues 82 to 266 (VVSIHFCQTC…AATDYFLPLD (185 aa)). Catalysis depends on charge relay system residues His-120, Asp-151, and Ser-233. PDZ domains follow at residues 289-374 (QWIL…LLVQ) and 876-957 (VFCG…VTFD).

This sequence belongs to the peptidase S1C family.

The protein localises to the nucleus. In terms of biological role, nuclear serine protease which mediates apoptosis. This chain is Pro-apoptotic serine protease nma111 (nma111), found in Aspergillus clavatus (strain ATCC 1007 / CBS 513.65 / DSM 816 / NCTC 3887 / NRRL 1 / QM 1276 / 107).